A 464-amino-acid polypeptide reads, in one-letter code: Protein FAM90A7 (464 aa).

Disordered stretches follow at residues 1 to 42 (MMAR…DPRL), 69 to 387 (VPAT…AGHD), and 410 to 437 (AAPSFHSPEKPGAFLAQSPHVSEKSEAP). Composition is skewed to basic and acidic residues over residues 74–89 (GKKEGKENLKPWKPRA) and 97–111 (NKDKGEKEERPRQQD). Low complexity predominate over residues 180–197 (LASLSPLRKASLSSSSSL).

The protein belongs to the FAM90 family.

This is Protein FAM90A7 from Homo sapiens (Human).